We begin with the raw amino-acid sequence, 552 residues long: Probable bifunctional methylthioribose-1-phosphate isomerase/methylthioribulose-1-phosphate dehydratase (552 aa).

The tract at residues 1 to 333 (MRPIDDSSLT…VVTEHGVVHG (333 aa)) is methylthioribose-1-phosphate isomerase activity. Residues 49 to 51 (RGA), R91, and Q195 contribute to the substrate site. D236 functions as the Proton donor in the catalytic mechanism. 246–247 (NK) provides a ligand contact to substrate. A methylthioribulose-1-phosphate dehydratase activity region spans residues 334–535 (TVAAEPGARI…AVCELVLRTG (202 aa)). Residues H427 and H429 each contribute to the Zn(2+) site.

The protein in the N-terminal section; belongs to the eIF-2B alpha/beta/delta subunits family. MtnA subfamily. It in the C-terminal section; belongs to the aldolase class II family. MtnB subfamily. Zn(2+) is required as a cofactor.

The catalysed reaction is 5-(methylsulfanyl)-alpha-D-ribose 1-phosphate = 5-(methylsulfanyl)-D-ribulose 1-phosphate. It carries out the reaction 5-(methylsulfanyl)-D-ribulose 1-phosphate = 5-methylsulfanyl-2,3-dioxopentyl phosphate + H2O. It participates in amino-acid biosynthesis; L-methionine biosynthesis via salvage pathway; L-methionine from S-methyl-5-thio-alpha-D-ribose 1-phosphate: step 1/6. Its pathway is amino-acid biosynthesis; L-methionine biosynthesis via salvage pathway; L-methionine from S-methyl-5-thio-alpha-D-ribose 1-phosphate: step 2/6. Functionally, bifunctional protein that catalyzes the interconversion of methylthioribose-1-phosphate (MTR-1-P) into methylthioribulose-1-phosphate (MTRu-1-P), and the dehydration of methylthioribulose-1-phosphate (MTRu-1-P) into 2,3-diketo-5-methylthiopentyl-1-phosphate (DK-MTP-1-P). The sequence is that of Probable bifunctional methylthioribose-1-phosphate isomerase/methylthioribulose-1-phosphate dehydratase (mtnAB) from Nocardia farcinica (strain IFM 10152).